The chain runs to 156 residues: Small ribosomal subunit protein uS7 (156 aa).

It belongs to the universal ribosomal protein uS7 family. In terms of assembly, part of the 30S ribosomal subunit. Contacts proteins S9 and S11.

In terms of biological role, one of the primary rRNA binding proteins, it binds directly to 16S rRNA where it nucleates assembly of the head domain of the 30S subunit. Is located at the subunit interface close to the decoding center, probably blocks exit of the E-site tRNA. This chain is Small ribosomal subunit protein uS7, found in Klebsiella pneumoniae subsp. pneumoniae (strain ATCC 700721 / MGH 78578).